The following is a 210-amino-acid chain: Uridine kinase P10 (210 aa).

10–18 (GISGSGKST) is an ATP binding site. Residue Asp41 is part of the active site.

It belongs to the uridine kinase family. In terms of assembly, interacts with host eIF-2B; this interaction disrupts the interaction between eIF2 and eIF-2B, which leads to the inhibition of stress granules formation.

The protein resides in the host cytoplasm. The protein localises to the host perinuclear region. The catalysed reaction is uridine + ATP = UMP + ADP + H(+). In terms of biological role, inhibits the integrated stress response (ISR) in the infected cell by preventing the sequestration of eIF2B by phosphorylated EIF2S1/eIF-2alpha. Stress granule formation in response to EIF2S1/eIF-2alpha phosphorylation is thus inhibited, which allows protein synthesis and viral replication. Phosphorylates uridine to uridine monophosphate. This Beluga whale coronavirus (strain SW1) (BwCoV) protein is Uridine kinase P10 (ORF10).